The primary structure comprises 130 residues: L-ectoine synthase (130 aa).

The protein belongs to the ectoine synthase family.

The catalysed reaction is (2S)-4-acetamido-2-aminobutanoate = L-ectoine + H2O. Its pathway is amine and polyamine biosynthesis; ectoine biosynthesis; L-ectoine from L-aspartate 4-semialdehyde: step 3/3. Catalyzes the circularization of gamma-N-acetyl-alpha,gamma-diaminobutyric acid (ADABA) to ectoine (1,4,5,6-tetrahydro-2-methyl-4-pyrimidine carboxylic acid), which is an excellent osmoprotectant. In Mycobacteroides abscessus (strain ATCC 19977 / DSM 44196 / CCUG 20993 / CIP 104536 / JCM 13569 / NCTC 13031 / TMC 1543 / L948) (Mycobacterium abscessus), this protein is L-ectoine synthase.